Reading from the N-terminus, the 162-residue chain is Large ribosomal subunit protein uL30 (162 aa).

This sequence belongs to the universal ribosomal protein uL30 family. Part of the 50S ribosomal subunit.

The protein is Large ribosomal subunit protein uL30 of Desulfurococcus amylolyticus (strain DSM 18924 / JCM 16383 / VKM B-2413 / 1221n) (Desulfurococcus kamchatkensis).